The sequence spans 1485 residues: Putative E3 ubiquitin-protein ligase LIN-1 (1485 aa).

Residues 337–353 (EENEDDSDSELENESVD) show a composition bias toward acidic residues. Disordered regions lie at residues 337–363 (EENE…IFSP) and 384–417 (NQIP…KRDS). Residues 510-585 (KPPKDFVCPI…TSWKEQNPEL (76 aa)) enclose the U-box domain. WD repeat units follow at residues 1204–1241 (SSNG…PRVI), 1246–1283 (EHTK…IKCI), 1409–1448 (SLST…RVAS), and 1454–1485 (GHTK…WALD).

In terms of tissue distribution, expressed in roots and nodules, and at very low levels in calli and seedling shoots.

It catalyses the reaction S-ubiquitinyl-[E2 ubiquitin-conjugating enzyme]-L-cysteine + [acceptor protein]-L-lysine = [E2 ubiquitin-conjugating enzyme]-L-cysteine + N(6)-ubiquitinyl-[acceptor protein]-L-lysine.. The protein operates within protein modification; protein ubiquitination. Functionally, putative E3 ubiquitin-protein ligase involved in the rhizobial infection process. Plays an important role in the early steps of infection thread formation and in growth and differentiation of nodules. This is Putative E3 ubiquitin-protein ligase LIN-1 from Lotus japonicus (Lotus corniculatus var. japonicus).